The chain runs to 686 residues: Translation initiation factor IF-2 (686 aa).

Residues 53-105 (EKPSVADEFEVEEKVVRSKKNSNKKKKKGKGNEDKRQENFAGRQQTQTVETPD) are disordered. The segment covering 69-81 (RSKKNSNKKKKKG) has biased composition (basic residues). The 170-residue stretch at 188–357 (ERPAVVTIMG…LLVSEVEEYK (170 aa)) folds into the tr-type G domain. The segment at 197-204 (GHVDHGKT) is G1. 197–204 (GHVDHGKT) is a GTP binding site. Residues 222-226 (GITQH) form a G2 region. The tract at residues 243–246 (DTPG) is G3. Residues 243 to 247 (DTPGH) and 297 to 300 (NKMD) contribute to the GTP site. Residues 297–300 (NKMD) are G4. Positions 333–335 (SAI) are G5.

The protein belongs to the TRAFAC class translation factor GTPase superfamily. Classic translation factor GTPase family. IF-2 subfamily.

It is found in the cytoplasm. In terms of biological role, one of the essential components for the initiation of protein synthesis. Protects formylmethionyl-tRNA from spontaneous hydrolysis and promotes its binding to the 30S ribosomal subunits. Also involved in the hydrolysis of GTP during the formation of the 70S ribosomal complex. This chain is Translation initiation factor IF-2, found in Bacillus cereus (strain ATCC 10987 / NRS 248).